A 131-amino-acid chain; its full sequence is D-ribose pyranase (131 aa).

H20 functions as the Proton donor in the catalytic mechanism. Residues D28, H98, and 120 to 122 contribute to the substrate site; that span reads YAN.

This sequence belongs to the RbsD / FucU family. RbsD subfamily. Homodecamer.

It is found in the cytoplasm. The catalysed reaction is beta-D-ribopyranose = beta-D-ribofuranose. It participates in carbohydrate metabolism; D-ribose degradation; D-ribose 5-phosphate from beta-D-ribopyranose: step 1/2. Its function is as follows. Catalyzes the interconversion of beta-pyran and beta-furan forms of D-ribose. This is D-ribose pyranase from Clostridium botulinum (strain Eklund 17B / Type B).